Reading from the N-terminus, the 364-residue chain is tRNA 2-selenouridine synthase (364 aa).

Residues 14 to 137 (LIADTPIIDV…LRQTAIQATI (124 aa)) enclose the Rhodanese domain. Cys-97 functions as the S-selanylcysteine intermediate in the catalytic mechanism.

Belongs to the SelU family. Monomer.

The enzyme catalyses 5-methylaminomethyl-2-thiouridine(34) in tRNA + selenophosphate + (2E)-geranyl diphosphate + H2O + H(+) = 5-methylaminomethyl-2-selenouridine(34) in tRNA + (2E)-thiogeraniol + phosphate + diphosphate. It carries out the reaction 5-methylaminomethyl-2-thiouridine(34) in tRNA + (2E)-geranyl diphosphate = 5-methylaminomethyl-S-(2E)-geranyl-thiouridine(34) in tRNA + diphosphate. It catalyses the reaction 5-methylaminomethyl-S-(2E)-geranyl-thiouridine(34) in tRNA + selenophosphate + H(+) = 5-methylaminomethyl-2-(Se-phospho)selenouridine(34) in tRNA + (2E)-thiogeraniol. The catalysed reaction is 5-methylaminomethyl-2-(Se-phospho)selenouridine(34) in tRNA + H2O = 5-methylaminomethyl-2-selenouridine(34) in tRNA + phosphate. Functionally, involved in the post-transcriptional modification of the uridine at the wobble position (U34) of tRNA(Lys), tRNA(Glu) and tRNA(Gln). Catalyzes the conversion of 2-thiouridine (S2U-RNA) to 2-selenouridine (Se2U-RNA). Acts in a two-step process involving geranylation of 2-thiouridine (S2U) to S-geranyl-2-thiouridine (geS2U) and subsequent selenation of the latter derivative to 2-selenouridine (Se2U) in the tRNA chain. In Escherichia coli O157:H7, this protein is tRNA 2-selenouridine synthase.